The chain runs to 784 residues: Phosphate transporter PHO1 homolog 1 (784 aa).

Residues 1–387 lie on the Cytoplasmic side of the membrane; it reads MVKFTKQFEG…HHRKESHSVT (387 aa). The 334-residue stretch at 2-335 folds into the SPX domain; the sequence is VKFTKQFEGQ…GKQILPIYLK (334 aa). The chain crosses the membrane as a helical span at residues 388-408; the sequence is FFIGLFTGCFVALLAGYIIVA. The Extracellular portion of the chain corresponds to 409–429; it reads HLTGMYRQHSANTFYMETAYP. Residues 430-450 form a helical membrane-spanning segment; sequence VLSMFGLLFLHLFLYGCNIFM. Residues 451-474 lie on the Cytoplasmic side of the membrane; that stretch reads WRKARINYSFIFELGSKNELKYRD. Residues 475 to 495 form a helical membrane-spanning segment; sequence VFLICTASMSAIAGVMFVHLS. The Extracellular segment spans residues 496–507; sequence LLEKGYSFRQVQ. A helical transmembrane segment spans residues 508–528; that stretch reads VIPGLLLLGFLLILICPLNIF. Residues 529-654 are Cytoplasmic-facing; the sequence is YKSSRYRLIS…TKVAYEKERS (126 aa). Positions 593–784 constitute an EXS domain; that stretch reads MRVKYYRDLA…LPFREVDEED (192 aa). The helical transmembrane segment at 655-675 threads the bilayer; that stretch reads LGWLCLVVAMSSVATIYQLYW. Topologically, residues 676-703 are extracellular; sequence DFVKDWGLLQHNSNNPWLRNQLMLRQKS. Residues 704–724 form a helical membrane-spanning segment; sequence IYYFSMVLNLVLRLAWLQTVL. At 725–784 the chain is on the cytoplasmic side; it reads HSSFEHVDYRVTGLFLAALEVIRRGQWNFYRLENEHLNNAGKFRAVKTVPLPFREVDEED.

Belongs to the SYG1 (TC 2.A.94) family. Expressed in vascular cylinder of roots, leaves, stems, petals, sepals and filaments. Expressed in receptacle, stigma apex and anther connective tissue.

The protein localises to the cell membrane. Its function is as follows. Contributes to the loading of inorganic phosphate (Pi) into the root xylem vessels. This is Phosphate transporter PHO1 homolog 1 (PHO1-H1) from Arabidopsis thaliana (Mouse-ear cress).